The sequence spans 383 residues: Lipid-A-disaccharide synthase (383 aa).

It belongs to the LpxB family.

The enzyme catalyses a lipid X + a UDP-2-N,3-O-bis[(3R)-3-hydroxyacyl]-alpha-D-glucosamine = a lipid A disaccharide + UDP + H(+). Its pathway is bacterial outer membrane biogenesis; LPS lipid A biosynthesis. Condensation of UDP-2,3-diacylglucosamine and 2,3-diacylglucosamine-1-phosphate to form lipid A disaccharide, a precursor of lipid A, a phosphorylated glycolipid that anchors the lipopolysaccharide to the outer membrane of the cell. The protein is Lipid-A-disaccharide synthase of Aliivibrio fischeri (strain MJ11) (Vibrio fischeri).